Here is a 163-residue protein sequence, read N- to C-terminus: Nucleotide-binding protein MS1759 (163 aa).

It belongs to the YajQ family.

Nucleotide-binding protein. The chain is Nucleotide-binding protein MS1759 from Mannheimia succiniciproducens (strain KCTC 0769BP / MBEL55E).